A 125-amino-acid chain; its full sequence is Small ribosomal subunit protein uS13 (125 aa).

This sequence belongs to the universal ribosomal protein uS13 family. As to quaternary structure, part of the 30S ribosomal subunit. Forms a loose heterodimer with protein S19. Forms two bridges to the 50S subunit in the 70S ribosome.

Located at the top of the head of the 30S subunit, it contacts several helices of the 16S rRNA. In the 70S ribosome it contacts the 23S rRNA (bridge B1a) and protein L5 of the 50S subunit (bridge B1b), connecting the 2 subunits; these bridges are implicated in subunit movement. Contacts the tRNAs in the A and P-sites. This chain is Small ribosomal subunit protein uS13, found in Gluconacetobacter diazotrophicus (strain ATCC 49037 / DSM 5601 / CCUG 37298 / CIP 103539 / LMG 7603 / PAl5).